A 589-amino-acid chain; its full sequence is CTP synthase (589 aa).

The interval 1–281 (MPQSRTHSRT…DAYVVRQLGL (281 aa)) is amidoligase domain. Residue Ser-23 participates in CTP binding. Ser-23 is a binding site for UTP. ATP contacts are provided by residues 24 to 29 (SLGKGL) and Asp-81. The Mg(2+) site is built by Asp-81 and Glu-155. CTP-binding positions include 162-164 (DIE), 202-207 (KTKPTQ), and Lys-238. Residues 202-207 (KTKPTQ) and Lys-238 contribute to the UTP site. The region spanning 306–554 (RIALVGKYVD…VDAALRHKLE (249 aa)) is the Glutamine amidotransferase type-1 domain. Position 369 (Gly-369) interacts with L-glutamine. Cys-396 serves as the catalytic Nucleophile; for glutamine hydrolysis. L-glutamine is bound by residues 397–400 (LGLQ), Glu-419, and Arg-480. Active-site residues include His-527 and Glu-529. A disordered region spans residues 562-589 (HGEERAAADDEIAESADRDEVASVDSAG).

Belongs to the CTP synthase family. In terms of assembly, homotetramer.

The enzyme catalyses UTP + L-glutamine + ATP + H2O = CTP + L-glutamate + ADP + phosphate + 2 H(+). It catalyses the reaction L-glutamine + H2O = L-glutamate + NH4(+). The catalysed reaction is UTP + NH4(+) + ATP = CTP + ADP + phosphate + 2 H(+). It participates in pyrimidine metabolism; CTP biosynthesis via de novo pathway; CTP from UDP: step 2/2. Its activity is regulated as follows. Allosterically activated by GTP, when glutamine is the substrate; GTP has no effect on the reaction when ammonia is the substrate. The allosteric effector GTP functions by stabilizing the protein conformation that binds the tetrahedral intermediate(s) formed during glutamine hydrolysis. Inhibited by the product CTP, via allosteric rather than competitive inhibition. Catalyzes the ATP-dependent amination of UTP to CTP with either L-glutamine or ammonia as the source of nitrogen. Regulates intracellular CTP levels through interactions with the four ribonucleotide triphosphates. The polypeptide is CTP synthase (Rhodococcus opacus (strain B4)).